The chain runs to 270 residues: Thiazole synthase (270 aa).

Catalysis depends on lysine 112, which acts as the Schiff-base intermediate with DXP. Residues glycine 173, alanine 199–glycine 200, and asparagine 221–serine 222 contribute to the 1-deoxy-D-xylulose 5-phosphate site.

Belongs to the ThiG family. In terms of assembly, homotetramer. Forms heterodimers with either ThiH or ThiS.

It localises to the cytoplasm. It carries out the reaction [ThiS sulfur-carrier protein]-C-terminal-Gly-aminoethanethioate + 2-iminoacetate + 1-deoxy-D-xylulose 5-phosphate = [ThiS sulfur-carrier protein]-C-terminal Gly-Gly + 2-[(2R,5Z)-2-carboxy-4-methylthiazol-5(2H)-ylidene]ethyl phosphate + 2 H2O + H(+). Its pathway is cofactor biosynthesis; thiamine diphosphate biosynthesis. Catalyzes the rearrangement of 1-deoxy-D-xylulose 5-phosphate (DXP) to produce the thiazole phosphate moiety of thiamine. Sulfur is provided by the thiocarboxylate moiety of the carrier protein ThiS. In vitro, sulfur can be provided by H(2)S. The chain is Thiazole synthase from Pseudomonas putida (strain ATCC 700007 / DSM 6899 / JCM 31910 / BCRC 17059 / LMG 24140 / F1).